Reading from the N-terminus, the 361-residue chain is Glutamate 5-kinase (361 aa).

Lys14 contacts ATP. Substrate-binding residues include Ser54, Asp141, and Asn153. Positions 277 to 355 (KGAVIINQGA…KGLKPVIHYD (79 aa)) constitute a PUA domain.

This sequence belongs to the glutamate 5-kinase family.

The protein resides in the cytoplasm. The catalysed reaction is L-glutamate + ATP = L-glutamyl 5-phosphate + ADP. Its pathway is amino-acid biosynthesis; L-proline biosynthesis; L-glutamate 5-semialdehyde from L-glutamate: step 1/2. Functionally, catalyzes the transfer of a phosphate group to glutamate to form L-glutamate 5-phosphate. The sequence is that of Glutamate 5-kinase from Chlorobaculum tepidum (strain ATCC 49652 / DSM 12025 / NBRC 103806 / TLS) (Chlorobium tepidum).